Reading from the N-terminus, the 350-residue chain is tRNA uridine(34) hydroxylase (350 aa).

The Rhodanese domain maps to Asp-146–Leu-240. Cys-200 acts as the Cysteine persulfide intermediate in catalysis.

Belongs to the TrhO family.

The catalysed reaction is uridine(34) in tRNA + AH2 + O2 = 5-hydroxyuridine(34) in tRNA + A + H2O. Its function is as follows. Catalyzes oxygen-dependent 5-hydroxyuridine (ho5U) modification at position 34 in tRNAs, the first step in 5-carboxymethoxyuridine (cmo5U) biosynthesis. May be part of an alternate pathway, which is able to bypass cmo5U biogenesis in a subset of tRNAs under aerobic conditions. In Escherichia coli O9:H4 (strain HS), this protein is tRNA uridine(34) hydroxylase.